A 341-amino-acid polypeptide reads, in one-letter code: UDP-N-acetylenolpyruvoylglucosamine reductase (341 aa).

The 171-residue stretch at 15-185 (VEQSCLSLIE…TAVGLRLPKA (171 aa)) folds into the FAD-binding PCMH-type domain. The active site involves Arg-161. Catalysis depends on Ser-231, which acts as the Proton donor. Glu-327 is a catalytic residue.

It belongs to the MurB family. Requires FAD as cofactor.

It localises to the cytoplasm. The catalysed reaction is UDP-N-acetyl-alpha-D-muramate + NADP(+) = UDP-N-acetyl-3-O-(1-carboxyvinyl)-alpha-D-glucosamine + NADPH + H(+). The protein operates within cell wall biogenesis; peptidoglycan biosynthesis. Functionally, cell wall formation. In Shewanella sp. (strain ANA-3), this protein is UDP-N-acetylenolpyruvoylglucosamine reductase.